A 571-amino-acid chain; its full sequence is NADH-quinone oxidoreductase subunit C/D (571 aa).

Residues 1–171 are NADH dehydrogenase I subunit C; that stretch reads MQASEKTLNE…NLSNTMNYRR (171 aa). The tract at residues 194 to 571 is NADH dehydrogenase I subunit D; the sequence is AQVVLNWGPL…LDPVVGEVDR (378 aa).

The protein in the N-terminal section; belongs to the complex I 30 kDa subunit family. This sequence in the C-terminal section; belongs to the complex I 49 kDa subunit family. As to quaternary structure, NDH-1 is composed of 13 different subunits. Subunits NuoB, CD, E, F, and G constitute the peripheral sector of the complex.

The protein localises to the cell inner membrane. The enzyme catalyses a quinone + NADH + 5 H(+)(in) = a quinol + NAD(+) + 4 H(+)(out). NDH-1 shuttles electrons from NADH, via FMN and iron-sulfur (Fe-S) centers, to quinones in the respiratory chain. The immediate electron acceptor for the enzyme in this species is believed to be ubiquinone. Couples the redox reaction to proton translocation (for every two electrons transferred, four hydrogen ions are translocated across the cytoplasmic membrane), and thus conserves the redox energy in a proton gradient. The sequence is that of NADH-quinone oxidoreductase subunit C/D (nuoC) from Hydrogenobaculum sp. (strain Y04AAS1).